The chain runs to 406 residues: Cysteine desulfurase (406 aa).

The residue at position 226 (Lys226) is an N6-(pyridoxal phosphate)lysine. The Cysteine persulfide intermediate role is filled by Cys364.

The protein belongs to the class-V pyridoxal-phosphate-dependent aminotransferase family. Csd subfamily. As to quaternary structure, homodimer. Interacts with SufE and the SufBCD complex composed of SufB, SufC and SufD. The interaction with SufE is required to mediate the direct transfer of the sulfur atom from the S-sulfanylcysteine. The cofactor is pyridoxal 5'-phosphate.

Its subcellular location is the cytoplasm. It carries out the reaction (sulfur carrier)-H + L-cysteine = (sulfur carrier)-SH + L-alanine. The enzyme catalyses L-selenocysteine + AH2 = hydrogenselenide + L-alanine + A + H(+). The protein operates within cofactor biosynthesis; iron-sulfur cluster biosynthesis. Functionally, cysteine desulfurases mobilize the sulfur from L-cysteine to yield L-alanine, an essential step in sulfur metabolism for biosynthesis of a variety of sulfur-containing biomolecules. Component of the suf operon, which is activated and required under specific conditions such as oxidative stress and iron limitation. Acts as a potent selenocysteine lyase in vitro, that mobilizes selenium from L-selenocysteine. Selenocysteine lyase activity is however unsure in vivo. In Cronobacter sakazakii (strain ATCC BAA-894) (Enterobacter sakazakii), this protein is Cysteine desulfurase.